The primary structure comprises 308 residues: Putative mitochondrial transporter UCP3 (308 aa).

At 1–10 (MVGLQPSEVP) the chain is on the mitochondrial intermembrane side. The helical transmembrane segment at 11–32 (PTTVVKFLGAGTAACFADLLTF) threads the bilayer. 3 Solcar repeats span residues 11–102 (PTTV…VKQF), 111–202 (SSVA…IKEK), and 211–296 (DNFP…LKRA). Topologically, residues 33–73 (PLDTAKVRLQIQGENPGAQSVQYRGVLGTILTMVRTEGPRS) are mitochondrial matrix. A helical membrane pass occupies residues 74–96 (PYSGLVAGLHRQMSFASIRIGLY). Topologically, residues 97–116 (DSVKQFYTPKGADHSSVAIR) are mitochondrial intermembrane. Residues 117-133 (ILAGCTTGAMAVTCAQP) traverse the membrane as a helical segment. Residues 134–179 (TDVVKVRFQAMIRLGTGGERKYRGTMDAYRTIAREEGVRGLWKGTW) are Mitochondrial matrix-facing. Residues 180–196 (PNITRNAIVNCAEMVTY) form a helical membrane-spanning segment. The Mitochondrial intermembrane portion of the chain corresponds to 197–213 (DIIKEKLLESHLFTDNF). The helical transmembrane segment at 214–233 (PCHFVSAFGAGFCATVVASP) threads the bilayer. The Mitochondrial matrix portion of the chain corresponds to 234–267 (VDVVKTRYMNAPLGRYRSPLHCMLKMVAQEGPTA). A helical membrane pass occupies residues 268–290 (FYKGFVPSFLRLGAWNVMMFVTY). Residues 275–297 (SFLRLGAWNVMMFVTYEQLKRAL) form a purine nucleotide binding region. Residues 291-308 (EQLKRALMKVQVLRESPF) are Mitochondrial intermembrane-facing.

It belongs to the mitochondrial carrier (TC 2.A.29) family. As to quaternary structure, interacts with HAX1; the interaction is direct and calcium-dependent.

The protein localises to the mitochondrion inner membrane. Its activity is regulated as follows. Inhibited by purine nucleotides and inorganic phosphate (in vitro). Its function is as follows. Putative transmembrane transporter that plays a role in mitochondrial metabolism via an as yet unclear mechanism. Originally, this mitochondrial protein was thought to act as a proton transmembrane transporter from the mitochondrial intermembrane space into the matrix, causing proton leaks through the inner mitochondrial membrane, thereby uncoupling mitochondrial membrane potential generation from ATP synthesis. However, this function is controversial and uncoupling may not be the function, or at least not the main function, but rather a consequence of more conventional metabolite transporter activity. In Mus musculus (Mouse), this protein is Putative mitochondrial transporter UCP3.